The chain runs to 416 residues: Tumor necrosis factor receptor superfamily member 16 (416 aa).

Positions 1–19 (MAGFVPLLLLLLPAGPTWG) are cleaved as a signal peptide. TNFR-Cys repeat units follow at residues 23–57 (KCLT…TVCE), 58–99 (PCLD…DAVC), 100–138 (RCAY…DTVC), and 140–180 (ECPE…DAEC). Disulfide bonds link Cys-24/Cys-35, Cys-36/Cys-49, Cys-39/Cys-56, Cys-59/Cys-75, Cys-78/Cys-91, Cys-81/Cys-99, Cys-101/Cys-114, Cys-117/Cys-130, Cys-120/Cys-138, Cys-141/Cys-156, Cys-159/Cys-172, and Cys-162/Cys-180. At 29–239 (YTTSGECCKA…PVVSRGTADN (211 aa)) the chain is on the extracellular side. Residue Asn-52 is glycosylated (N-linked (GlcNAc...) asparagine). The chain crosses the membrane as a helical span at residues 240–261 (LIPVYCSILAAVVVGLVAYIAF). At 262–416 (KRWNSCKQNK…YSESTATSPV (155 aa)) the chain is on the cytoplasmic side. Polar residues-rich tracts occupy residues 270–284 (NKQG…QTPS) and 294–315 (SGIS…STQG). The interval 270-328 (NKQGANNRPVNQTPSPEGEKLHSDSGISVDSQSLHDQQPPNQSTQGPAPKGDGSLYASL) is disordered. One can recognise a Death domain in the interval 333–410 (QEEVEKLLSS…DIAESLYSES (78 aa)).

In terms of assembly, homodimer; disulfide-linked. Heterodimer with SORCS2. The extracellular domains of the heterodimer bind NGF. Post-translationally, N- and O-glycosylated. Phosphorylated on serine residues. Detected in embryonic dorsal root ganglion and retina.

Its subcellular location is the cell membrane. The protein localises to the perikaryon. The protein resides in the cell projection. It localises to the growth cone. It is found in the dendritic spine. Its function is as follows. Low affinity receptor which can bind to NGF, BDNF, NTF3, and NTF4. Forms a heterodimeric receptor with SORCS2 that binds the precursor forms of NGF, BDNF and NTF3 with high affinity, and has much lower affinity for mature NGF and BDNF. Plays an important role in differentiation and survival of specific neuronal populations during development. Can mediate cell survival as well as cell death of neural cells. Plays a role in the inactivation of RHOA. Necessary for the circadian oscillation of clock genes in the suprachiasmatic nucleus (SCmgetaN) of the brain and in liver and of the genes involved in glucose and lipid metabolism in the liver. This chain is Tumor necrosis factor receptor superfamily member 16 (NGFR), found in Gallus gallus (Chicken).